Here is a 268-residue protein sequence, read N- to C-terminus: Shikimate dehydrogenase (NADP(+)) (268 aa).

Thr62 provides a ligand contact to shikimate. Lys66 serves as the catalytic Proton acceptor. An NADP(+)-binding site is contributed by Glu78. Positions 87 and 102 each coordinate shikimate. NADP(+) contacts are provided by residues 126–130 (GSGGI) and Leu207. Position 209 (Tyr209) interacts with shikimate. Residue Gly230 participates in NADP(+) binding.

This sequence belongs to the shikimate dehydrogenase family. Homodimer.

It carries out the reaction shikimate + NADP(+) = 3-dehydroshikimate + NADPH + H(+). It participates in metabolic intermediate biosynthesis; chorismate biosynthesis; chorismate from D-erythrose 4-phosphate and phosphoenolpyruvate: step 4/7. Functionally, involved in the biosynthesis of the chorismate, which leads to the biosynthesis of aromatic amino acids. Catalyzes the reversible NADPH linked reduction of 3-dehydroshikimate (DHSA) to yield shikimate (SA). The chain is Shikimate dehydrogenase (NADP(+)) from Thermoplasma acidophilum (strain ATCC 25905 / DSM 1728 / JCM 9062 / NBRC 15155 / AMRC-C165).